Reading from the N-terminus, the 230-residue chain is Large ribosomal subunit protein uL1 (230 aa).

This sequence belongs to the universal ribosomal protein uL1 family. As to quaternary structure, part of the 50S ribosomal subunit.

Functionally, binds directly to 23S rRNA. The L1 stalk is quite mobile in the ribosome, and is involved in E site tRNA release. Its function is as follows. Protein L1 is also a translational repressor protein, it controls the translation of the L11 operon by binding to its mRNA. In Methylobacillus flagellatus (strain ATCC 51484 / DSM 6875 / VKM B-1610 / KT), this protein is Large ribosomal subunit protein uL1.